A 522-amino-acid chain; its full sequence is 2-isopropylmalate synthase (522 aa).

The 263-residue stretch at V5 to H267 folds into the Pyruvate carboxyltransferase domain. Residues D14, H202, H204, and N238 each contribute to the Mn(2+) site. A regulatory domain region spans residues Q392 to V522.

This sequence belongs to the alpha-IPM synthase/homocitrate synthase family. LeuA type 1 subfamily. Homodimer. Mn(2+) serves as cofactor.

It localises to the cytoplasm. The catalysed reaction is 3-methyl-2-oxobutanoate + acetyl-CoA + H2O = (2S)-2-isopropylmalate + CoA + H(+). Its pathway is amino-acid biosynthesis; L-leucine biosynthesis; L-leucine from 3-methyl-2-oxobutanoate: step 1/4. In terms of biological role, catalyzes the condensation of the acetyl group of acetyl-CoA with 3-methyl-2-oxobutanoate (2-ketoisovalerate) to form 3-carboxy-3-hydroxy-4-methylpentanoate (2-isopropylmalate). This is 2-isopropylmalate synthase from Shewanella oneidensis (strain ATCC 700550 / JCM 31522 / CIP 106686 / LMG 19005 / NCIMB 14063 / MR-1).